A 1980-amino-acid chain; its full sequence is Unconventional myosin-IXb (1980 aa).

S2 carries the N-acetylserine modification. The Ras-associating domain occupies 15-114 (ATFHLHIYPQ…YYFLLQERNA (100 aa)). Positions 146-954 (ADFDDLCNLP…ERQALQERLH (809 aa)) constitute a Myosin motor domain. 239 to 246 (GESGSGKT) is a binding site for ATP. The disordered stretch occupies residues 715-736 (GVSSPVTRSHVEELPRGANTPS). A phosphoserine mark is found at S717 and S718. An actin-binding region spans residues 845 to 856 (KAEPFFIRCIRS). A neck or regulatory domain region spans residues 941 to 1045 (LKETERQALQ…CRGHLQRRSF (105 aa)). 4 IQ domains span residues 958 to 978 (LRRI…RHFV), 981 to 1001 (KHAA…RTLE), 1002 to 1024 (RTRA…AYHH), and 1025 to 1054 (QRHS…EKQK). Position 1046 is a phosphoserine (S1046). The interval 1046-1980 (SQMMLEKQKA…ERAVRGAAEE (935 aa)) is tail. Disordered regions lie at residues 1049 to 1281 (MLEK…HPDT), 1302 to 1380 (SQSL…QGDS), and 1394 to 1449 (DKKP…NRKV). Residues 1097-1106 (TWMNSKSPNG) are compositionally biased toward polar residues. Phosphoserine is present on residues S1108, S1115, and S1177. 2 stretches are compositionally biased toward basic and acidic residues: residues 1129 to 1177 (ESHE…RKAS) and 1186 to 1195 (EDTKEPREDG). S1220, S1222, S1229, S1237, S1243, and S1247 each carry phosphoserine. Positions 1235-1247 (RVSPVLPSSSLES) are enriched in low complexity. A compositionally biased stretch (basic and acidic residues) spans 1250 to 1265 (DEDKGENSTKVQDKPE). Phosphoserine occurs at positions 1266, 1268, and 1304. T1319 carries the post-translational modification Phosphothreonine. Phosphoserine is present on residues S1327, S1329, and S1337. Positions 1327-1344 (SFSTSDVSKLSPVKTSTE) are enriched in polar residues. The Phorbol-ester/DAG-type zinc finger occupies 1592 to 1641 (GHVFASYQVNIPQSCEQCLSYIWLMDKALLCSVCKMTCHKKCVHKIQSYC). S1649 is subject to Phosphoserine. Residues 1663 to 1848 (DSLTSDKASV…MLIKEQMRKY (186 aa)) enclose the Rho-GAP domain. An interaction with RHOA region spans residues 1699–1704 (AANRTR). Residues 1841-1861 (IKEQMRKYKVKMEEINHLEAA) are a coiled coil. The residue at position 1886 (S1886) is a Phosphoserine. Residues 1891-1923 (VRTKSPRTPVVQDLEELGALPEEAAGGDEDREK) form a disordered region. Residues 1918–1948 (DEDREKEILMERIQSIKEEKEDITYRLPELD) are a coiled coil. Phosphoserine occurs at positions 1932, 1952, and 1959. The segment covering 1937-1953 (KEDITYRLPELDPRGSD) has biased composition (basic and acidic residues). A disordered region spans residues 1937–1980 (KEDITYRLPELDPRGSDEENLDSETSASTESLLEERAVRGAAEE). Residue T1965 is modified to Phosphothreonine. A compositionally biased stretch (basic and acidic residues) spans 1969-1980 (LEERAVRGAAEE).

It belongs to the TRAFAC class myosin-kinesin ATPase superfamily. Myosin family. In terms of assembly, interacts (via IQ domains) with CALM. Interacts with RHOA. Interacts (via Rho-GAP domain) with ROBO1; this inhibits the interaction with RHOA and the stimulation of RHOA GTPase activity, and thereby increases the levels of active RHOA. In terms of tissue distribution, expressed in testis, lung, thymus, brain, liver, spleen and heart muscle. Detected in lung, testis, spleen and liver, and at reduced level in different brain regions (at protein level).

The protein resides in the cytoplasm. It localises to the cell cortex. It is found in the perinuclear region. Its subcellular location is the cytoskeleton. Myosins are actin-based motor molecules with ATPase activity. Unconventional myosins serve in intracellular movements. Binds actin with high affinity both in the absence and presence of ATP and its mechanochemical activity is inhibited by calcium ions. Also acts as a GTPase activator for RHOA. Plays a role in the regulation of cell migration via its role as RHOA GTPase activator. This is regulated by its interaction with the SLIT2 receptor ROBO1; interaction with ROBO1 impairs interaction with RHOA and subsequent activation of RHOA GTPase activity, and thereby leads to increased levels of active, GTP-bound RHOA. The polypeptide is Unconventional myosin-IXb (Myo9b) (Rattus norvegicus (Rat)).